The sequence spans 415 residues: Sensor protein kinase WalK (415 aa).

One can recognise an HAMP domain in the interval 11–63 (RTITKPITDMRNQTVEMSRGNYTQRVKIYGNDEIGELALAFNNLSKRVQEAQA). Positions 68–138 (EKRRLDSVIT…EIQENNDSFL (71 aa)) constitute a PAS domain. Zn(2+)-binding residues include histidine 78, aspartate 81, histidine 171, and glutamate 175. A PAC domain is found at 121 to 185 (LEDEFKLEEI…QQQVERERRE (65 aa)). The region spanning 189–407 (NVSHELRTPL…SIFITLPCEV (219 aa)) is the Histidine kinase domain. Residue histidine 192 is modified to Phosphohistidine; by autocatalysis.

As to quaternary structure, forms homodimers. Forms homooligomers. It depends on NH4(+) as a cofactor. In terms of processing, autophosphorylated.

It is found in the cell membrane. It catalyses the reaction ATP + protein L-histidine = ADP + protein N-phospho-L-histidine.. With respect to regulation, by zinc. Zinc-binding negatively regulates WalK kinase activity and thus autophosphorylation. Functionally, member of the two-component regulatory system WalK/WalR that regulates genes involved in cell wall metabolism, virulence regulation, biofilm production, oxidative stress resistance and antibiotic resistance via direct or indirect regulation of autolysins. Functions as a sensor protein kinase which is autophosphorylated at a histidine residue in the dimerization domain and transfers its phosphate group to the conserved aspartic acid residue in the regulatory domain of WalR. In turn, WalR binds to the upstream promoter regions of the target genes to positively and negatively regulate their expression. The chain is Sensor protein kinase WalK (walK) from Staphylococcus aureus.